Consider the following 533-residue polypeptide: Nitrogen fixation protein AnfA (533 aa).

Residues 33 to 193 are a domain; sequence ILYKISQIIT…PLVELYLIEN (161 aa). The 141-residue stretch at 46 to 186 folds into the GAF domain; the sequence is DLADALSIVL…MIATMIAPLV (141 aa). The Sigma-54 factor interaction domain occupies 219 to 448; the sequence is IIGNSKPMQE…LENVMERAVI (230 aa). Residues 247–254 and 310–319 contribute to the ATP site; these read GESGVGKE and ADGGTIFLDE. Residues 501-520 constitute a DNA-binding region (H-T-H motif); sequence IGEAAKELGLARRMLGVRME.

AnfA is essential for nitrogen fixation under Mo- and V-deficient conditions. It is required for the regulation of nitrogenase 3 transcription. Interacts with sigma-54. The polypeptide is Nitrogen fixation protein AnfA (anfA) (Azotobacter vinelandii).